Here is a 441-residue protein sequence, read N- to C-terminus: Deoxyguanosinetriphosphate triphosphohydrolase-like protein (441 aa).

A disordered region spans residues 1-27 (MTSSVWQERRHGEDKQRRNDHRSPYQR). The span at 7 to 27 (QERRHGEDKQRRNDHRSPYQR) shows a compositional bias: basic and acidic residues. The HD domain occupies 59–252 (RLTHSLEVSQ…MELADDIAYA (194 aa)).

This sequence belongs to the dGTPase family. Type 2 subfamily.

In Shewanella oneidensis (strain ATCC 700550 / JCM 31522 / CIP 106686 / LMG 19005 / NCIMB 14063 / MR-1), this protein is Deoxyguanosinetriphosphate triphosphohydrolase-like protein.